Reading from the N-terminus, the 123-residue chain is uncharacterized protein (123 aa).

The next 2 helical transmembrane spans lie at 1-21 and 103-123; these read MVLP…AVGC and LESS…ILLF.

It is found in the membrane. This is an uncharacterized protein from Saccharomyces cerevisiae (strain ATCC 204508 / S288c) (Baker's yeast).